We begin with the raw amino-acid sequence, 109 residues long: MSASELATSYSALILADEGIEITSDKLLSLTKAANVDVEPIWATIFAKALEGKDLKELLLNIGSGAGAAPVAGGAAAPAAADGEAPAEEKEEAKEEEESDEDMGFGLFD.

Residues 69–84 (APVAGGAAAPAAADGE) show a composition bias toward low complexity. The interval 69–109 (APVAGGAAAPAAADGEAPAEEKEEAKEEEESDEDMGFGLFD) is disordered. Positions 94–103 (KEEEESDEDM) are enriched in acidic residues.

It belongs to the eukaryotic ribosomal protein P1/P2 family. Component of the large ribosomal subunit (LSU). Mature yeast ribosomes consist of a small (40S) and a large (60S) subunit. The 40S small subunit contains 1 molecule of ribosomal RNA (18S rRNA) and at least 33 different proteins. The large 60S subunit contains 3 rRNA molecules (25S, 5.8S and 5S rRNA) and at least 46 different proteins. The acidic ribosomal P-proteins form the stalk structure of the 60S subunit. They are organized as a pentameric complex in which uL10/P0 interacts with 2 heterodimers of P1 and P2 proteins.

The protein resides in the cytoplasm. Its function is as follows. Component of the ribosome, a large ribonucleoprotein complex responsible for the synthesis of proteins in the cell. The small ribosomal subunit (SSU) binds messenger RNAs (mRNAs) and translates the encoded message by selecting cognate aminoacyl-transfer RNA (tRNA) molecules. The large subunit (LSU) contains the ribosomal catalytic site termed the peptidyl transferase center (PTC), which catalyzes the formation of peptide bonds, thereby polymerizing the amino acids delivered by tRNAs into a polypeptide chain. The nascent polypeptides leave the ribosome through a tunnel in the LSU and interact with protein factors that function in enzymatic processing, targeting, and the membrane insertion of nascent chains at the exit of the ribosomal tunnel. The protein is Large ribosomal subunit protein P1A (rpp101) of Schizosaccharomyces pombe (strain 972 / ATCC 24843) (Fission yeast).